A 121-amino-acid chain; its full sequence is Large ribosomal subunit protein uL14 (121 aa).

It belongs to the universal ribosomal protein uL14 family. Part of the 50S ribosomal subunit. Forms a cluster with proteins L3 and L19. In the 70S ribosome, L14 and L19 interact and together make contacts with the 16S rRNA in bridges B5 and B8.

In terms of biological role, binds to 23S rRNA. Forms part of two intersubunit bridges in the 70S ribosome. The sequence is that of Large ribosomal subunit protein uL14 from Mycoplasmopsis synoviae (strain 53) (Mycoplasma synoviae).